Consider the following 133-residue polypeptide: MLKLLWIALGGSLGALCRYGLSVLARWGLPPTVPWGTLAANLVGCFLIGGLWVLAAQYSFSEELRVFIFTGGIGSLTTFSTYSLESLLLLREGRVWAGLANVLVSNVLGLVLVAIGAGCALFLLGGPVAAFGA.

Helical transmembrane passes span 4-24, 35-55, 66-86, and 107-127; these read LLWI…LSVL, WGTL…WVLA, VFIF…SLES, and VLGL…LGGP. 2 residues coordinate Na(+): Gly74 and Thr77.

This sequence belongs to the fluoride channel Fluc/FEX (TC 1.A.43) family.

Its subcellular location is the cell inner membrane. It catalyses the reaction fluoride(in) = fluoride(out). With respect to regulation, na(+) is not transported, but it plays an essential structural role and its presence is essential for fluoride channel function. Fluoride-specific ion channel. Important for reducing fluoride concentration in the cell, thus reducing its toxicity. This chain is Fluoride-specific ion channel FluC, found in Salinibacter ruber (strain DSM 13855 / M31).